Reading from the N-terminus, the 198-residue chain is MLYPTPIAKLIDSYSKLPGIGIKTATRLAFYTIGMSNEDVNDFAKNLLAAKRELTYCSICGNLTDDDPCHICTDTSRDQTTILVVEDAKDVSAMEKIQEYRGYYHVLHGLISPMNGMGPDDINLKSLITRLMDGKVSEVIVATNATADGEATSMYISRVLKPAGIKVTRLARGLAVGSDIEYADEVTLLRAIENRTEL.

The segment at 57–72 (CSICGNLTDDDPCHIC) adopts a C4-type zinc-finger fold. Residues 80–175 (TTILVVEDAK…KVTRLARGLA (96 aa)) form the Toprim domain.

This sequence belongs to the RecR family.

In terms of biological role, may play a role in DNA repair. It seems to be involved in an RecBC-independent recombinational process of DNA repair. It may act with RecF and RecO. This Streptococcus pyogenes serotype M5 (strain Manfredo) protein is Recombination protein RecR.